Here is an 86-residue protein sequence, read N- to C-terminus: Arminin 7246 (86 aa).

A signal peptide spans 1-18 (MRPEYAVLFLALIALTYA). Positions 19-57 (RSNEDVREEIKNEIEKDILEDLVEDEGELDDKAIDVNDA) are excised as a propeptide. Alanine 83 carries the post-translational modification Alanine amide.

It belongs to the arminin family. In terms of tissue distribution, expressed in entodermal epithelium along the body column.

Its subcellular location is the secreted. The protein resides in the target cell membrane. Its function is as follows. Antimicrobial peptide with a broad-spectrum antimicrobial activity. Keeps its antibacterial activity under a wide range of salt concentrations that mimic physiological conditions of human blood, which is surprising, since Hydra is an obligate freshwater animal with nearly no salt tolerance. Does not affect red blood cells. The chain is Arminin 7246 from Hydra viridissima (Green hydra).